The chain runs to 278 residues: 3-methyl-2-oxobutanoate hydroxymethyltransferase (278 aa).

2 residues coordinate Mg(2+): aspartate 44 and aspartate 83. Residues 44 to 45 (DS), aspartate 83, and lysine 112 each bind 3-methyl-2-oxobutanoate. Residue glutamate 114 participates in Mg(2+) binding. The Proton acceptor role is filled by glutamate 181.

It belongs to the PanB family. As to quaternary structure, homodecamer; pentamer of dimers. It depends on Mg(2+) as a cofactor.

It localises to the cytoplasm. It catalyses the reaction 3-methyl-2-oxobutanoate + (6R)-5,10-methylene-5,6,7,8-tetrahydrofolate + H2O = 2-dehydropantoate + (6S)-5,6,7,8-tetrahydrofolate. It participates in cofactor biosynthesis; (R)-pantothenate biosynthesis; (R)-pantoate from 3-methyl-2-oxobutanoate: step 1/2. In terms of biological role, catalyzes the reversible reaction in which hydroxymethyl group from 5,10-methylenetetrahydrofolate is transferred onto alpha-ketoisovalerate to form ketopantoate. The chain is 3-methyl-2-oxobutanoate hydroxymethyltransferase from Roseiflexus sp. (strain RS-1).